The chain runs to 215 residues: Ribulose-phosphate 3-epimerase (215 aa).

S13 contributes to the substrate binding site. A divalent metal cation-binding residues include H38, D40, H69, and D175. Catalysis depends on D40, which acts as the Proton acceptor. Residues H69, 175–177 (DGG), and 196–197 (GS) each bind substrate. D175 functions as the Proton donor in the catalytic mechanism.

Belongs to the ribulose-phosphate 3-epimerase family. A divalent metal cation serves as cofactor.

The enzyme catalyses D-ribulose 5-phosphate = D-xylulose 5-phosphate. It functions in the pathway carbohydrate degradation. In terms of biological role, catalyzes the reversible epimerization of D-ribulose 5-phosphate to D-xylulose 5-phosphate. The chain is Ribulose-phosphate 3-epimerase from Mycoplasma pneumoniae (strain ATCC 29342 / M129 / Subtype 1) (Mycoplasmoides pneumoniae).